We begin with the raw amino-acid sequence, 579 residues long: Protein SSH4 (579 aa).

The Cytoplasmic portion of the chain corresponds to 1–44; sequence MYVTFNEALDSSFGNLESPNHDFKVGDPNMVPTPPMDSDSAAIS. The chain crosses the membrane as a helical; Signal-anchor for type II membrane protein span at residues 45–65; that stretch reads LAFLISLSITFAILMLILVVI. Residues 66 to 579 are Lumenal-facing; it reads AAYVTFCGDD…SSKKKNRSRK (514 aa). In terms of domain architecture, B30.2/SPRY spans 166 to 364; it reads DQQFIKDRGI…DNVSFREALS (199 aa). N-linked (GlcNAc...) asparagine glycans are attached at residues Asn-212 and Asn-356. At Ser-358 the chain carries Phosphoserine. Residue Lys-367 forms a Glycyl lysine isopeptide (Lys-Gly) (interchain with G-Cter in ubiquitin) linkage. Residues Asn-430 and Asn-507 are each glycosylated (N-linked (GlcNAc...) asparagine). The interval 499–579 is disordered; sequence HDSLETDDNN…SSKKKNRSRK (81 aa). Over residues 509 to 525 the composition is skewed to low complexity; the sequence is TDNNVNNNDENAGCNEN. Residues 555–579 show a composition bias toward basic residues; the sequence is PRNKSTKKRQRNRGKSSKKKNRSRK. Residues Asn-557 and Asn-575 are each glycosylated (N-linked (GlcNAc...) asparagine).

Belongs to the SSH4 family.

The protein resides in the vacuole membrane. It localises to the endosome membrane. Functionally, components of the endosome-vacuole trafficking pathway that regulates nutrient transport. May be involved in processes which determine whether plasma membrane proteins are degraded or routed to the plasma membrane. Confers leflunomide resistance when overexpressed. This Saccharomyces cerevisiae (strain YJM789) (Baker's yeast) protein is Protein SSH4 (SSH4).